The sequence spans 320 residues: Thioredoxin reductase (320 aa).

FAD is bound at residue Thr-36–Gln-43. Cys-136 and Cys-139 are disulfide-bonded. FAD is bound at residue Asp-287–Ala-296.

Belongs to the class-II pyridine nucleotide-disulfide oxidoreductase family. Homodimer. FAD serves as cofactor.

The protein localises to the cytoplasm. It carries out the reaction [thioredoxin]-dithiol + NADP(+) = [thioredoxin]-disulfide + NADPH + H(+). This Coxiella burnetii (strain RSA 493 / Nine Mile phase I) protein is Thioredoxin reductase (trxB).